A 683-amino-acid chain; its full sequence is MNKELASKFLSSIKHEREQDIQTTSRLLTTLSIQQLVQNGLAINNIHLENIRSGLIGKLYMELGPNLAVNDKIQRGDIKVGDIVLVRPAKTKVNTKTKPKVKKVSEDSNGEQAECSGVVYKMSDTQITIALEESQDVIATTFYSYSKLYILKTTNVVTYNRMESTMRKLSEISSPIQDKIIQYLVNERPFIPNTNSFQNIKSFLNPNLNDSQKTAINFAINNDLTIIHGPPGTGKTFTLIELIQQLLIKNPEERILICGPSNISVDTILERLTPLVPNNLLLRIGHPARLLDSNKRHSLDILSKKNTIVKDISQEIDKLIQENKKLKNYKQRKENWNEIKLLRKDLKKREFKTIKDLIIQSRIVVTTLHGSSSRELCSLYRDDPNFQLFDTLIIDEVSQAMEPQCWIPLIAHQNQFHKLVLAGDNKQLPPTIKTEDDKNVIHNLETTLFDRIIKIFPKRDMVKFLNVQYRMNQKIMEFPSHSMYNGKLLADATVANRLLIDLPTVDATPSEDDDDTKIPLIWYDTQGDEFQETADEATILGSKYNEGEIAIVKEHIENLRSFNVPENSIGVISPYNAQVSHLKKLIHDELKLTDIEISTVDGFQGREKDVIILSLVRSNEKFEVGFLKEERRLNVAMTRPRRQLVVVGNIEVLQRCGNKYLKSWSEWCEENADVRYPNIDDYL.

Position 229-236 (Gly229–Thr236) interacts with ATP.

This sequence belongs to the DNA2/NAM7 helicase family. As to quaternary structure, associates with the hexameric DNA polymerase alpha.

The protein localises to the cytoplasm. It localises to the nucleus. The enzyme catalyses ATP + H2O = ADP + phosphate + H(+). Functionally, DNA polymerase alpha-associated DNA helicase which may be involved in DNA replication. This chain is DNA polymerase alpha-associated DNA helicase A (HCS1), found in Saccharomyces cerevisiae (strain ATCC 204508 / S288c) (Baker's yeast).